Here is an 863-residue protein sequence, read N- to C-terminus: Neuroligin-1 (863 aa).

The first 45 residues, 1–45 (MALPRCTWPNYVWRAVMACLVHRGLGAPLTLCMLGCLLQAGHVLS), serve as a signal peptide directing secretion. Residues 46–717 (QKLDDVDPLV…DQRDYSTELS (672 aa)) are Extracellular-facing. N-linked (GlcNAc...) (complex) asparagine glycosylation is present at Asn109. Cys117 and Cys153 form a disulfide bridge. The segment at 183–212 (KGGPLTKKQTDDLGDNDGAEDEDIRDSGGP) is disordered. Acidic residues predominate over residues 194 to 206 (DLGDNDGAEDEDI). Asn323 and Asn363 each carry an N-linked (GlcNAc...) (complex) asparagine glycan. 2 disulfides stabilise this stretch: Cys362/Cys373 and Cys532/Cys566. The N-linked (GlcNAc...) asparagine glycan is linked to Asn567. The tract at residues 670–708 (PSTDITFRPTRKNSVPVTSAFPTAKQDDPKQQPSPFSVD) is disordered. A compositionally biased stretch (polar residues) spans 681–690 (KNSVPVTSAF). 2 O-linked (GalNAc...) serine glycosylation sites follow: Ser703 and Ser706. The chain crosses the membrane as a helical span at residues 718–738 (VTIAVGASLLFLNILAFAALY). Residues 739 to 863 (YKKDKRRHDV…HPHSHSTTRV (125 aa)) are Cytoplasmic-facing. The disordered stretch occupies residues 842–863 (GGQNNTLPHPHPHPHSHSTTRV). Over residues 851-863 (PHPHPHSHSTTRV) the composition is skewed to basic residues.

Belongs to the type-B carboxylesterase/lipase family. As to quaternary structure, interacts with neurexins NRXN1, NRXN2 and NRXN3. Interaction with neurexins is mediated by heparan sulfate glycan modification on neurexin. Interacts with NLGN3. Interacts with AIP1 and PDZRN3. Interacts (via its C-terminus) with DLG4/PSD-95 (via PDZ domain 3). Interacts with GOPC. In terms of tissue distribution, expressed in the blood vessel walls (at protein level). Highly expressed in brain through prenatal stages, and at lower levels in pancreas islet beta cells.

The protein resides in the cell membrane. Its subcellular location is the postsynaptic density. It localises to the synaptic cleft. It is found in the synaptic cell membrane. Its function is as follows. Cell surface protein involved in cell-cell-interactions via its interactions with neurexin family members. Plays a role in synapse function and synaptic signal transmission, and probably mediates its effects by recruiting and clustering other synaptic proteins. May promote the initial formation of synapses, but is not essential for this. In vitro, triggers the de novo formation of presynaptic structures. May be involved in specification of excitatory synapses. Required to maintain wakefulness quality and normal synchrony of cerebral cortex activity during wakefulness and sleep. The protein is involved in nervous system development. The sequence is that of Neuroligin-1 (NLGN1) from Homo sapiens (Human).